We begin with the raw amino-acid sequence, 331 residues long: MQIITIFGATGNQGSSVARSLLRNRSFEVRCITRNAESKKAQLLKAQGAVIVEADGYDTSQIQQAFSGSWGAFVNTNGDDPSLASENRTDRDLGLSIIRGAAAAGVKHLVYSSGPWAAKLSGGACSVPSNDAKAEVQHVAQGLGFETVTPIMPGWFFETFLEPQMAAIFGGFPVTPDEEGWLTCRAPLWGGREHVPFLSVDNDFGDIVHGVFLNPVRWNLRPIQAISDFLSFADFVNTYVSLTGKKARFVALSSPMEMETMGHPLLESIRGFFIFSQLRDGEYFGTGPTEKETATALKQAAHRAQANDRKGEQAALTSARDFLQARFGNSK.

Residues 8–13 (GATGNQ), 34–38 (RNAES), 55–56 (DG), 76–78 (TNG), K133, and 155–167 (WFFE…QMAA) each bind NADP(+).

This sequence belongs to the NmrA-type oxidoreductase family.

The protein operates within secondary metabolite biosynthesis. Functionally, nmrA-like family domain-containing oxidoreductase; part of the him gene cluster that mediates the biosynthesis of himeic acid A, a ubiquitin-activating enzyme (E1) inhibitor. First, himA, together with the trans-enoyl reductase himH, catalyzes the formation of apolyketide chain, which is then condensed with leucine by the NRPS activity of himA. Dieckmann cyclization and release from himA gives a tetramic acid intermediate as the product of himA PKS-NRPS. HimG then catalyzes alpha-oxidation of the tetramic acid ring, with a subsequent rearrangement to yield apyrone intermediate. Two terminal methyl groups of polyketide and amide side chains are oxidized to carboxylic acids by himC cytochrome P450 monooxygenase to form himeic acid A. Himeic acid A is further converted to himeic acid B and C during culture growth. No gene responsible for pyrone to pyridone conversion was found in the him gene cluster and himeic acid A is non-enzymatically converted to himeic acid C by the incorporation of an ammonium nitrogen atom in a pH5 buffer, and to himeic acid B at a conversion ratio of 50% during incubation in MeOH for 5 days. In Aspergillus japonicus, this protein is NmrA-like family domain-containing oxidoreductase himF.